Reading from the N-terminus, the 689-residue chain is Glycine--tRNA ligase beta subunit (689 aa).

This sequence belongs to the class-II aminoacyl-tRNA synthetase family. Tetramer of two alpha and two beta subunits.

It localises to the cytoplasm. It carries out the reaction tRNA(Gly) + glycine + ATP = glycyl-tRNA(Gly) + AMP + diphosphate. This chain is Glycine--tRNA ligase beta subunit, found in Shewanella pealeana (strain ATCC 700345 / ANG-SQ1).